A 159-amino-acid polypeptide reads, in one-letter code: MKLLSKIMIIALATSMLQACNGPGGMNKQGTGTLLGGAGGALLGSQFGKGTGQLVGVGVGALLGAVLGGQIGAGMDEQDRRLAELTSQRALETAPSGSNVEWRNPDNGNYGYVTPNKTYRNSTGQYCREYTQTVVIGGKQQKAYGNACRQPDGQWQVVN.

The first 19 residues, 1-19 (MKLLSKIMIIALATSMLQA), serve as a signal peptide directing secretion. Residue cysteine 20 is the site of N-palmitoyl cysteine attachment. Cysteine 20 is lipidated: S-diacylglycerol cysteine.

It belongs to the rickettsiale 17 kDa surface antigen family.

Its subcellular location is the cell outer membrane. The polypeptide is 17 kDa surface antigen (omp) (Rickettsia japonica (strain ATCC VR-1363 / YH)).